A 232-amino-acid polypeptide reads, in one-letter code: Phosphatidylserine decarboxylase proenzyme (232 aa).

Catalysis depends on serine 190, which acts as the Schiff-base intermediate with substrate; via pyruvic acid. Position 190 is a pyruvic acid (Ser); by autocatalysis (serine 190).

This sequence belongs to the phosphatidylserine decarboxylase family. PSD-A subfamily. As to quaternary structure, heterodimer of a large membrane-associated beta subunit and a small pyruvoyl-containing alpha subunit. The cofactor is pyruvate. In terms of processing, is synthesized initially as an inactive proenzyme. Formation of the active enzyme involves a self-maturation process in which the active site pyruvoyl group is generated from an internal serine residue via an autocatalytic post-translational modification. Two non-identical subunits are generated from the proenzyme in this reaction, and the pyruvate is formed at the N-terminus of the alpha chain, which is derived from the carboxyl end of the proenzyme. The post-translation cleavage follows an unusual pathway, termed non-hydrolytic serinolysis, in which the side chain hydroxyl group of the serine supplies its oxygen atom to form the C-terminus of the beta chain, while the remainder of the serine residue undergoes an oxidative deamination to produce ammonia and the pyruvoyl prosthetic group on the alpha chain.

Its subcellular location is the cell membrane. It catalyses the reaction a 1,2-diacyl-sn-glycero-3-phospho-L-serine + H(+) = a 1,2-diacyl-sn-glycero-3-phosphoethanolamine + CO2. The protein operates within phospholipid metabolism; phosphatidylethanolamine biosynthesis; phosphatidylethanolamine from CDP-diacylglycerol: step 2/2. In terms of biological role, catalyzes the formation of phosphatidylethanolamine (PtdEtn) from phosphatidylserine (PtdSer). This chain is Phosphatidylserine decarboxylase proenzyme, found in Rhizobium johnstonii (strain DSM 114642 / LMG 32736 / 3841) (Rhizobium leguminosarum bv. viciae).